The sequence spans 212 residues: Putative 3-methyladenine DNA glycosylase (212 aa).

Belongs to the DNA glycosylase MPG family.

The chain is Putative 3-methyladenine DNA glycosylase from Nocardia farcinica (strain IFM 10152).